The chain runs to 536 residues: Putative ATP-dependent RNA helicase L364 (536 aa).

Residues 47 to 214 (ISILLKYFLV…IPFYLMNFIP (168 aa)) form the Helicase ATP-binding domain. 60–67 (SDTGVGKT) is a binding site for ATP. The short motif at 160–163 (DESH) is the DEAH box element. Residues 288–334 (LSDDSDKIAEAYEEIAELMRELEEKKTQCKNHLAKIQKLKQEIELRK) adopt a coiled-coil conformation. A Helicase C-terminal domain is found at 338 to 486 (FIEQTQLYLE…ISAINDGDLE (149 aa)). The tract at residues 502–536 (VLNEPVNNPIEEPVNDPVKDPVEDLTDNQPNIVEV) is disordered.

Belongs to the DEAD box helicase family. DEAH subfamily.

The catalysed reaction is ATP + H2O = ADP + phosphate + H(+). In Acanthamoeba polyphaga (Amoeba), this protein is Putative ATP-dependent RNA helicase L364.